Consider the following 764-residue polypeptide: Hemocyte protein-glutamine gamma-glutamyltransferase (764 aa).

Catalysis depends on residues Cys-343, His-402, and Asp-425. Ca(2+)-binding residues include Asn-465, Asp-467, Glu-522, and Glu-527.

It belongs to the transglutaminase superfamily. Transglutaminase family. Ca(2+) is required as a cofactor. In terms of tissue distribution, mainly expressed in hemocytes, hepatopancreas, and gastric tissues. On the other hand nothing was detected in the heart, intestine and muscle.

It localises to the membrane. It catalyses the reaction L-glutaminyl-[protein] + L-lysyl-[protein] = [protein]-L-lysyl-N(6)-5-L-glutamyl-[protein] + NH4(+). Catalyzes the cross-linking of proteins and the conjugation of polyamines to proteins. The chain is Hemocyte protein-glutamine gamma-glutamyltransferase from Tachypleus tridentatus (Japanese horseshoe crab).